We begin with the raw amino-acid sequence, 290 residues long: Lipoyl synthase (290 aa).

[4Fe-4S] cluster-binding residues include Cys-36, Cys-41, Cys-47, Cys-62, Cys-66, Cys-69, and Ser-275. A Radical SAM core domain is found at 48–264; it reads FSKKTATFMI…KEEALKIGFS (217 aa).

This sequence belongs to the radical SAM superfamily. Lipoyl synthase family. It depends on [4Fe-4S] cluster as a cofactor.

It localises to the cytoplasm. It carries out the reaction [[Fe-S] cluster scaffold protein carrying a second [4Fe-4S](2+) cluster] + N(6)-octanoyl-L-lysyl-[protein] + 2 oxidized [2Fe-2S]-[ferredoxin] + 2 S-adenosyl-L-methionine + 4 H(+) = [[Fe-S] cluster scaffold protein] + N(6)-[(R)-dihydrolipoyl]-L-lysyl-[protein] + 4 Fe(3+) + 2 hydrogen sulfide + 2 5'-deoxyadenosine + 2 L-methionine + 2 reduced [2Fe-2S]-[ferredoxin]. Its pathway is protein modification; protein lipoylation via endogenous pathway; protein N(6)-(lipoyl)lysine from octanoyl-[acyl-carrier-protein]: step 2/2. Catalyzes the radical-mediated insertion of two sulfur atoms into the C-6 and C-8 positions of the octanoyl moiety bound to the lipoyl domains of lipoate-dependent enzymes, thereby converting the octanoylated domains into lipoylated derivatives. This chain is Lipoyl synthase, found in Alkaliphilus metalliredigens (strain QYMF).